Consider the following 240-residue polypeptide: Large ribosomal subunit protein uL1 (240 aa).

This sequence belongs to the universal ribosomal protein uL1 family. Part of the 50S ribosomal subunit.

Its function is as follows. Binds directly to 23S rRNA. The L1 stalk is quite mobile in the ribosome, and is involved in E site tRNA release. In terms of biological role, protein L1 is also a translational repressor protein, it controls the translation of the L11 operon by binding to its mRNA. This chain is Large ribosomal subunit protein uL1, found in Nocardioides sp. (strain ATCC BAA-499 / JS614).